Here is a 37-residue protein sequence, read N- to C-terminus: Desulforedoxin (37 aa).

The Fe cation site is built by Cys-10, Cys-13, Cys-29, and Cys-30.

To the N-terminal section of desulfoferrodoxin. As to quaternary structure, homodimer. The cofactor is Fe cation.

Functionally, nonheme iron protein possibly involved in electron transport. In Megalodesulfovibrio gigas (Desulfovibrio gigas), this protein is Desulforedoxin (dsr).